Consider the following 198-residue polypeptide: Ribonuclease HII (198 aa).

In terms of domain architecture, RNase H type-2 spans 14–198; that stretch reads HMIVGVDEAG…FAPVAQLQLV (185 aa). Residues Asp20, Glu21, and Asp110 each coordinate a divalent metal cation.

It belongs to the RNase HII family. Mn(2+) is required as a cofactor. It depends on Mg(2+) as a cofactor.

The protein resides in the cytoplasm. It carries out the reaction Endonucleolytic cleavage to 5'-phosphomonoester.. Endonuclease that specifically degrades the RNA of RNA-DNA hybrids. This chain is Ribonuclease HII, found in Sphingopyxis alaskensis (strain DSM 13593 / LMG 18877 / RB2256) (Sphingomonas alaskensis).